We begin with the raw amino-acid sequence, 436 residues long: uncharacterized protein (436 aa).

Residues 1–19 (MKKLLLASIIGLASTTSFA) form the signal peptide.

This is an uncharacterized protein from Rickettsia bellii (strain RML369-C).